A 411-amino-acid chain; its full sequence is 2,3-bisphosphoglycerate-independent phosphoglycerate mutase (411 aa).

Belongs to the BPG-independent phosphoglycerate mutase family. A-PGAM subfamily.

The enzyme catalyses (2R)-2-phosphoglycerate = (2R)-3-phosphoglycerate. Its pathway is carbohydrate degradation; glycolysis; pyruvate from D-glyceraldehyde 3-phosphate: step 3/5. Functionally, catalyzes the interconversion of 2-phosphoglycerate and 3-phosphoglycerate. The chain is 2,3-bisphosphoglycerate-independent phosphoglycerate mutase from Pyrobaculum neutrophilum (strain DSM 2338 / JCM 9278 / NBRC 100436 / V24Sta) (Thermoproteus neutrophilus).